We begin with the raw amino-acid sequence, 904 residues long: Shieldin complex subunit 2 (904 aa).

The segment at 1–60 (MSGGSQVHIFWGAPVAPLKMTVSQDTASLMSVADPWKKIHLLYSQHSLYLKDEKQHKNLE) is sufficient for interaction with SHLD3 and MAD2L2. The segment at 1–568 (MSGGSQVHIF…AYVSSKHSYL (568 aa)) is interaction with ASTE1. The interval 721–891 (KCSGVVLIQA…LQQDFSLLDF (171 aa)) is mediates interaction with SHLD1.

The protein belongs to the SHLD2 family. As to quaternary structure, component of the shieldin complex, consisting of SHLD1, SHLD2, SHLD3 and MAD2L2/REV7. Within the complex, SHLD2 forms a scaffold which interacts with a SHLD3-MAD2L2 subcomplex via its N-terminus, and with SHLD1 via its C-terminus. Interacts with TP53BP1. Interacts with RIF1. Interacts with ASTE1.

The protein resides in the chromosome. Its function is as follows. Component of the shieldin complex, which plays an important role in repair of DNA double-stranded breaks (DSBs). During G1 and S phase of the cell cycle, the complex functions downstream of TP53BP1 to promote non-homologous end joining (NHEJ) and suppress DNA end resection. Mediates various NHEJ-dependent processes including immunoglobulin class-switch recombination, and fusion of unprotected telomeres. This is Shieldin complex subunit 2 from Pongo abelii (Sumatran orangutan).